Reading from the N-terminus, the 226-residue chain is Peroxynitrite isomerase (226 aa).

Positions 21-27 match the GXWXGXG motif; the sequence is GSWEGQG. Position 191 (histidine 191) interacts with heme b. The tract at residues 201-226 is disordered; that stretch reads SAAEGRLAPGAERPRGAGGRKQGEQS.

The protein belongs to the nitrobindin family. As to quaternary structure, homodimer. It depends on heme b as a cofactor.

It carries out the reaction peroxynitrite = nitrate. Its pathway is nitrogen metabolism. In terms of biological role, heme-binding protein able to scavenge peroxynitrite and to protect free L-tyrosine against peroxynitrite-mediated nitration, by acting as a peroxynitrite isomerase that converts peroxynitrite to nitrate. Therefore, this protein likely plays a role in peroxynitrite sensing and in the detoxification of reactive nitrogen and oxygen species (RNS and ROS, respectively). Is able to bind nitric oxide (NO) in vitro, but may act as a sensor of peroxynitrite levels in vivo. This is Peroxynitrite isomerase from Micrococcus luteus (strain ATCC 4698 / DSM 20030 / JCM 1464 / CCM 169 / CCUG 5858 / IAM 1056 / NBRC 3333 / NCIMB 9278 / NCTC 2665 / VKM Ac-2230) (Micrococcus lysodeikticus).